Here is an 893-residue protein sequence, read N- to C-terminus: MSVDNWLLHPLWGQTFLLLLSVAVAQAHWPSEPSEAVRDWKNQLEASMHSVLSDFQEAVPTVVGIPDGTAVVGRSFRVSIPTDLIASSGEIIKVSAAGKEALPSWLHWDPHSHILEGLPLDTDKGVHYISVSAARLGANGSHVPQTSSVFSIEVYPEDHNEPQSVRAASSDPGEVVPSACAADEPVTVLTVILDADLTKMTPKQRIDLLNRMQSFSEVELHNMKLVPVVNNRLFDMSAFMAGPGNAKKVVENGALLSWKLGCSLNQNSVPDIRGVETPAREGAMSAQLGYPVVGWHIANKKPTLPKRLRRQIHATPTPVTAIGPPTTAIQEPPSRIVPTPTSPAIAPPTETMAPPVRDPVPGKPTVTIRTRGAIIQTPTLGPIQPTRVSEAGTTVPGQIRPTLTIPGYVEPTAVITPPTTTTKKPRVSTPKPATPSTDSSTTTTRRPTKKPRTPRPVPRVTTKAPITRLETASPPTRIRTTTSGVPRGGEPNQRPELKNHIDRVDAWVGTYFEVKIPSDTFYDNEDTTTDKLKLTLKLREQQLVGEKSWVQFNSNSQLMYGLPDSSHVGKHEYFMHATDKGGLSAVDAFEIHVHKRPQGDKAPARFKARLAGDPAPVVNDIHKKIALVKKLAFAFGDRNCSSITLQNITRGSIVVEWTNNTLPLEPCPKEQIIGLSRRIADENGKPRPAFSNALEPDFKALSIAVTGSGSCRHLQFIPVAPPSPGSSAAPATEVPDRDPEKSSEDDVYLHTVIPAVVVAAILLIAGIIAMICYRKKRKGKLTLEDQATFIKKGVPIIFADELDDSKPPPSSSMPLILQEEKAPLPPPEYPNQSMPETTPLNQDTVGEYTPLRDEDPNAPPYQPPPPFTAPMEGKGSRPKNMTPYRSPPPYVPP.

The N-terminal stretch at 1–27 is a signal peptide; sequence MSVDNWLLHPLWGQTFLLLLSVAVAQA. Residues 28–406 form a required for laminin recognition region; it reads HWPSEPSEAV…GQIRPTLTIP (379 aa). An O-glycosylated at one site region spans residues 47–69; it reads SMHSVLSDFQEAVPTVVGIPDGT. Residue asparagine 139 is glycosylated (N-linked (GlcNAc...) asparagine). Cysteine 180 and cysteine 262 are oxidised to a cystine. The tract at residues 314-483 is mucin-like domain; it reads ATPTPVTAIG…PPTRIRTTTS (170 aa). Residues threonine 315, threonine 317, and threonine 377 are each glycosylated (O-linked (Man6P...) threonine). The segment at 379-498 is disordered; it reads TLGPIQPTRV…GEPNQRPELK (120 aa). Positions 409–445 are enriched in low complexity; it reads VEPTAVITPPTTTTKKPRVSTPKPATPSTDSSTTTTR. Positions 461–483 are O-glycosylated at seven sites with GalNAc; it reads TTKAPITRLETASPPTRIRTTTS. One can recognise a Peptidase S72 domain in the interval 601–710; that stretch reads KAPARFKARL…LSIAVTGSGS (110 aa). 3 N-linked (GlcNAc...) asparagine glycosylation sites follow: asparagine 639, asparagine 647, and asparagine 659. Topologically, residues 652–751 are extracellular; that stretch reads SIVVEWTNNT…SSEDDVYLHT (100 aa). A disulfide bond links cysteine 667 and cysteine 711. Residues 722–744 are disordered; that stretch reads PSPGSSAAPATEVPDRDPEKSSE. Basic and acidic residues predominate over residues 734–744; it reads VPDRDPEKSSE. Residues 752-772 traverse the membrane as a helical segment; it reads VIPAVVVAAILLIAGIIAMIC. Topologically, residues 773-893 are cytoplasmic; that stretch reads YRKKRKGKLT…YRSPPPYVPP (121 aa). The Nuclear localization signal signature appears at 774–780; the sequence is RKKRKGK. Phosphothreonine is present on threonine 788. Residues 817–893 are required for interaction with CAV3; the sequence is LQEEKAPLPP…YRSPPPYVPP (77 aa). Residues 821-893 are disordered; it reads KAPLPPPEYP…YRSPPPYVPP (73 aa). Positions 830-844 are enriched in polar residues; the sequence is PNQSMPETTPLNQDT. A compositionally biased stretch (pro residues) spans 857–868; it reads NAPPYQPPPPFT. The tract at residues 878–893 is required for binding DMD and UTRN; that stretch reads PKNMTPYRSPPPYVPP. The short motif at 887 to 890 is the PPXY motif element; the sequence is PPPY. Phosphotyrosine; by SRC is present on tyrosine 890.

In terms of assembly, monomer. Heterodimer of alpha- and beta-dystroglycan subunits which are the central components of the dystrophin-glycoprotein complex. This complex then can form a dystrophin-associated glycoprotein complex (DGC) which is composed of three subcomplexes: a cytoplasmic complex comprised of DMD (or UTRN), DTNA and a number of syntrophins, such as SNTB1, SNTB2, SNTG1 and SNTG2, the transmembrane dystroglycan complex, and the sarcoglycan-sarcospan complex. Interacts (via the N-terminal of alphaDAG1) with LARGE1; the interaction enhances laminin binding. Interacts with SGCD. Interacts with AGR2 and AGR3. Interacts (betaDAG1) with DMD; the interaction is inhibited by phosphorylation on the PPXY motif. Interacts (betaDAG1, via its PPXY motif) with UTRN (via its WWW and ZZ domains); the interaction is inhibited by phosphorylation on the PPXY motif. Interacts (betaDAG1, via its phosphorylated PPXY motif) with the SH2 domain-containing proteins, FYN, CSK, NCK and SHC. Interacts (betaDAG1) with CAV3 (via a central WW-like domain); the interaction disrupts the binding of DMD. BetaDAG1 directly interacts with ANK3, but not with ANK2; this interaction does not interfere with DMD-binding and is required for retention at costameres. Identified in a dystroglycan complex that contains at least PRX, DRP2, UTRN, DMD and DAG1. Interacts with POMGNT1. BetaDAG1 interacts with CD93. O-glycosylated. POMGNT1 catalyzes the initial addition of N-acetylglucosamine, giving rise to the GlcNAc(beta1-2)Man(alpha1-)O-Ser/Thr moiety and thus providing the necessary basis for the addition of further carbohydrate moieties. Heavily O-glycosylated comprising of up to two thirds of its mass and the carbohydrate composition differs depending on tissue type. Mucin-type O-glycosylation is important for ligand binding activity. O-mannosylation is found in high abundance in both brain and muscle where the most abundant glycan is Sia-alpha-2-3-Gal-beta-1-4-Glc-NAc-beta-1-2-Man. In muscle, glycosylation on Thr-315, Thr-317, Thr-379 by a phosphorylated O-mannosyl glycan with the structure 2-(N-acetylamido)-2-deoxygalactosyl-beta-1,3-2-(N-acetylamido)-2-deoxyglucosyl-beta-1,4-6-phosphomannose is mediated by like-acetylglucosaminyltransferase (LARGE1) protein amd is required for laminin binding. O-glycosylated in the N-terminal region with a core 1 or possibly core 8 glycan. The brain form displays a unique glycosylation pattern which is absent in other tissues; this form shows enhanced binding to laminin LAMA5 compared to the skeletal muscle form. In terms of processing, N-glycosylated. Post-translationally, autolytic cleavage produces the alpha and beta subunits. In cutaneous cells, as well as in certain pathological conditions, shedding of beta-dystroglycan can occur releasing a peptide of about 30 kDa. SRC-mediated phosphorylation of the PPXY motif of the beta subunit recruits SH2 domain-containing proteins, but inhibits binding to WWW domain-containing proteins, DMD and UTRN. This phosphorylation also inhibits nuclear entry. As to expression, detected in brain and kidney (at protein level). Detected in sciatic nerve (at protein level). Expressed in neurons and muscle cells (at protein level). Expressed in a variety of tissues. In brain, expressed in the hippocampal formation, the olfactory bulb, the cerebellum and the thalamus. In the peripheral nerve system, expressed in Schwann cells.

The protein localises to the secreted. The protein resides in the extracellular space. Its subcellular location is the cell membrane. It localises to the cytoplasm. It is found in the cytoskeleton. The protein localises to the nucleus. The protein resides in the nucleoplasm. Its subcellular location is the sarcolemma. It localises to the postsynaptic cell membrane. Its function is as follows. The dystroglycan complex is involved in a number of processes including laminin and basement membrane assembly, sarcolemmal stability, cell survival, peripheral nerve myelination, nodal structure, cell migration, and epithelial polarization. In terms of biological role, extracellular peripheral glycoprotein that acts as a receptor for extracellular matrix proteins containing laminin-G domains, and for certain adenoviruses. Receptor for laminin-2 (LAMA2) and agrin in peripheral nerve Schwann cells. Also acts as a receptor for laminin LAMA5. Functionally, transmembrane protein that plays important roles in connecting the extracellular matrix to the cytoskeleton. Acts as a cell adhesion receptor in both muscle and non-muscle tissues. Receptor for both DMD and UTRN and, through these interactions, scaffolds axin to the cytoskeleton. Also functions in cell adhesion-mediated signaling and implicated in cell polarity. The polypeptide is Dystroglycan 1 (Mus musculus (Mouse)).